A 193-amino-acid chain; its full sequence is Putative anthranilate synthase component II (193 aa).

The 192-residue stretch at 2-193 (KLLIINNHDS…WLAIPPTTNP (192 aa)) folds into the Glutamine amidotransferase type-1 domain. Residues cysteine 78, histidine 168, and glutamate 170 contribute to the active site.

Tetramer of two components I and two components II.

It carries out the reaction chorismate + L-glutamine = anthranilate + pyruvate + L-glutamate + H(+). Its pathway is amino-acid biosynthesis; L-tryptophan biosynthesis; L-tryptophan from chorismate: step 1/5. The polypeptide is Putative anthranilate synthase component II (Haemophilus influenzae (strain ATCC 51907 / DSM 11121 / KW20 / Rd)).